The primary structure comprises 558 residues: CTP synthase (558 aa).

Positions 1–267 (MAKFVFVTGG…CLEMLDVLNL (267 aa)) are amidoligase domain. A CTP-binding site is contributed by S13. S13 contacts UTP. Residues 14 to 19 (SIGKGI) and D71 each bind ATP. Mg(2+)-binding residues include D71 and E141. CTP is bound by residues 148-150 (DIE), 188-193 (KTKPTQ), and K224. UTP is bound by residues 188–193 (KTKPTQ) and K224. The 243-residue stretch at 292 to 534 (KVALVGKYVQ…IEAAQLRLPA (243 aa)) folds into the Glutamine amidotransferase type-1 domain. G354 serves as a coordination point for L-glutamine. Catalysis depends on C381, which acts as the Nucleophile; for glutamine hydrolysis. L-glutamine-binding positions include 382–385 (LGMQ), E405, and R462. Active-site residues include H507 and E509. Residues 536-558 (PDEALRRQSQTNISAQEQPSRIG) are disordered. The span at 542–558 (RQSQTNISAQEQPSRIG) shows a compositional bias: polar residues.

This sequence belongs to the CTP synthase family. As to quaternary structure, homotetramer.

It carries out the reaction UTP + L-glutamine + ATP + H2O = CTP + L-glutamate + ADP + phosphate + 2 H(+). The enzyme catalyses L-glutamine + H2O = L-glutamate + NH4(+). The catalysed reaction is UTP + NH4(+) + ATP = CTP + ADP + phosphate + 2 H(+). Its pathway is pyrimidine metabolism; CTP biosynthesis via de novo pathway; CTP from UDP: step 2/2. Allosterically activated by GTP, when glutamine is the substrate; GTP has no effect on the reaction when ammonia is the substrate. The allosteric effector GTP functions by stabilizing the protein conformation that binds the tetrahedral intermediate(s) formed during glutamine hydrolysis. Inhibited by the product CTP, via allosteric rather than competitive inhibition. In terms of biological role, catalyzes the ATP-dependent amination of UTP to CTP with either L-glutamine or ammonia as the source of nitrogen. Regulates intracellular CTP levels through interactions with the four ribonucleotide triphosphates. This is CTP synthase from Prochlorococcus marinus (strain MIT 9313).